The primary structure comprises 421 residues: ATP-dependent RNA helicase RhlB (421 aa).

Positions 9 to 37 (QKFSDFALHPKVVEALEKKGFHNCTPIQA) match the Q motif motif. Residues 40–219 (LPLTLAGRDV…FEQMNNAEYI (180 aa)) enclose the Helicase ATP-binding domain. 53–60 (AQTGTGKT) is an ATP binding site. Positions 165 to 168 (DEAD) match the DEAD box motif. The 146-residue stretch at 245-390 (RLLQTLIEEE…VSKYNPDALM (146 aa)) folds into the Helicase C-terminal domain. The interval 392–421 (DLPKPLRLTRPRTGNGPRRTGAPRNRRRSG) is disordered. The span at 402 to 414 (PRTGNGPRRTGAP) shows a compositional bias: low complexity.

It belongs to the DEAD box helicase family. RhlB subfamily. As to quaternary structure, component of the RNA degradosome, which is a multiprotein complex involved in RNA processing and mRNA degradation.

It is found in the cytoplasm. It catalyses the reaction ATP + H2O = ADP + phosphate + H(+). Its function is as follows. DEAD-box RNA helicase involved in RNA degradation. Has RNA-dependent ATPase activity and unwinds double-stranded RNA. The sequence is that of ATP-dependent RNA helicase RhlB from Escherichia coli O157:H7.